The chain runs to 456 residues: Methylenetetrahydrofolate--tRNA-(uracil-5-)-methyltransferase TrmFO (456 aa).

Gly9–Gly14 is a binding site for FAD.

It belongs to the MnmG family. TrmFO subfamily. FAD serves as cofactor.

Its subcellular location is the cytoplasm. It catalyses the reaction uridine(54) in tRNA + (6R)-5,10-methylene-5,6,7,8-tetrahydrofolate + NADH + H(+) = 5-methyluridine(54) in tRNA + (6S)-5,6,7,8-tetrahydrofolate + NAD(+). It carries out the reaction uridine(54) in tRNA + (6R)-5,10-methylene-5,6,7,8-tetrahydrofolate + NADPH + H(+) = 5-methyluridine(54) in tRNA + (6S)-5,6,7,8-tetrahydrofolate + NADP(+). Functionally, catalyzes the folate-dependent formation of 5-methyl-uridine at position 54 (M-5-U54) in all tRNAs. This is Methylenetetrahydrofolate--tRNA-(uracil-5-)-methyltransferase TrmFO from Novosphingobium aromaticivorans (strain ATCC 700278 / DSM 12444 / CCUG 56034 / CIP 105152 / NBRC 16084 / F199).